The primary structure comprises 391 residues: 3-ketoacyl-CoA thiolase (391 aa).

Residue Cys95 is the Acyl-thioester intermediate of the active site. Active-site proton acceptor residues include His347 and Cys377.

This sequence belongs to the thiolase-like superfamily. Thiolase family. In terms of assembly, heterotetramer of two alpha chains (FadB) and two beta chains (FadA).

The protein resides in the cytoplasm. It carries out the reaction an acyl-CoA + acetyl-CoA = a 3-oxoacyl-CoA + CoA. Its pathway is lipid metabolism; fatty acid beta-oxidation. Functionally, catalyzes the final step of fatty acid oxidation in which acetyl-CoA is released and the CoA ester of a fatty acid two carbons shorter is formed. In Vibrio parahaemolyticus serotype O3:K6 (strain RIMD 2210633), this protein is 3-ketoacyl-CoA thiolase.